A 491-amino-acid polypeptide reads, in one-letter code: AP-2 complex subunit mu (491 aa).

Phosphoserine is present on residues S179, S180, and S181. The region spanning 209-490 (KDEVFLYVNE…ISKAGSYEVR (282 aa)) is the MHD domain.

The protein belongs to the adaptor complexes medium subunit family. In terms of assembly, adaptor protein complex 2 (AP-2) is a heterotetramer composed of two large adaptins (alpha-type subunit APL3 and beta-type subunit APL1), a medium chain (mu-type subunit APM4) and a small adaptin (sigma-type subunit APS2).

The protein resides in the membrane. Its subcellular location is the clathrin-coated pit. The protein localises to the cytoplasmic vesicle. It localises to the clathrin-coated vesicle membrane. Component of the adaptor complexes which link clathrin to receptors in coated vesicles. Clathrin-associated protein complexes are believed to interact with the cytoplasmic tails of membrane proteins, leading to their selection and concentration. The sequence is that of AP-2 complex subunit mu (APM4) from Saccharomyces cerevisiae (strain ATCC 204508 / S288c) (Baker's yeast).